A 269-amino-acid polypeptide reads, in one-letter code: Shikimate dehydrogenase (NADP(+)) (269 aa).

Shikimate-binding positions include 17 to 19 and threonine 64; that span reads SKS. Residue lysine 68 is the Proton acceptor of the active site. Residue aspartate 80 participates in NADP(+) binding. Asparagine 89 and aspartate 105 together coordinate shikimate. NADP(+)-binding positions include 130 to 134, 154 to 159, and methionine 213; these read GAGGA and NRTRAK. Tyrosine 215 lines the shikimate pocket. Glycine 237 is an NADP(+) binding site.

The protein belongs to the shikimate dehydrogenase family. Homodimer.

It catalyses the reaction shikimate + NADP(+) = 3-dehydroshikimate + NADPH + H(+). It participates in metabolic intermediate biosynthesis; chorismate biosynthesis; chorismate from D-erythrose 4-phosphate and phosphoenolpyruvate: step 4/7. Involved in the biosynthesis of the chorismate, which leads to the biosynthesis of aromatic amino acids. Catalyzes the reversible NADPH linked reduction of 3-dehydroshikimate (DHSA) to yield shikimate (SA). This Neisseria meningitidis serogroup C (strain 053442) protein is Shikimate dehydrogenase (NADP(+)).